A 616-amino-acid polypeptide reads, in one-letter code: MALLQISEPGLSAAPHQRRLAAGIDLGTTNSLVATVRSGQAETLADHEGRHLLPSVVHYQQQGHSVGYDARTNAALDTANTISSVKRLMGRSLADIQQRYPHLPYQFQASENGLPMIETAAGLLNPVRVSADILKALAARATEALAGELDGVVITVPAYFDDAQRQGTKDAARLAGLHVLRLLNEPTAAAIAYGLDSGQEGVIAVYDLGGGTFDISILRLSRGVFEVLATGGDSALGGDDFDHLLADYIREQAGIPDRSDNRVQRELLDAAIAAKIALSDADSVTVNVAGWQGEISREQFNELIAPLVKRTLLACRRALKDAGVEADEVLEVVVVGGSTRVPLVRERVGEFFGRPPLTSIDPDKVVAIGAAIQADILVGNKPDSEMLLLDVIPLSLGLETMGGLVEKVIPRNTTIPVARAQDFTTFKDGQTAMSIHVMQGERELVQDCRSLARFALRGIPALPAGGAHIRVTFQVDADGLLSVTAMEKSTGVEASIQVKPSYGLTDSEIASMIKDSMSYAEQDVKARMLAEQKVEAARVLESLHGALAADAALLSAAERQAIDDAAAHLSEVAQGDDVDAIEQAIKNVDKQTQDFAARRMDQSVRRALKGHSVDEV.

Belongs to the heat shock protein 70 family.

Functionally, chaperone involved in the maturation of iron-sulfur cluster-containing proteins. Has a low intrinsic ATPase activity which is markedly stimulated by HscB. Involved in the maturation of IscU. The protein is Chaperone protein HscA of Escherichia coli O6:H1 (strain CFT073 / ATCC 700928 / UPEC).